Here is a 182-residue protein sequence, read N- to C-terminus: Dynactin subunit 5 (182 aa).

Met-1 is modified (N-acetylmethionine).

This sequence belongs to the dynactin subunits 5/6 family. Dynactin subunit 5 subfamily. As to quaternary structure, subunit of dynactin, a multiprotein complex part of a tripartite complex with dynein and a adapter, such as BICDL1, BICD2 or HOOK3. The dynactin complex is built around ACTR1A/ACTB filament and consists of an actin-related filament composed of a shoulder domain, a pointed end and a barbed end. Its length is defined by its flexible shoulder domain. The soulder is composed of 2 DCTN1 subunits, 4 DCTN2 and 2 DCTN3. The 4 DCNT2 (via N-terminus) bind the ACTR1A filament and act as molecular rulers to determine the length. The pointed end is important for binding dynein-dynactin cargo adapters. Consists of 4 subunits: ACTR10, DCNT4, DCTN5 and DCTN6. Within the complex DCTN6 forms a heterodimer with DCTN5. The barbed end is composed of a CAPZA1:CAPZB heterodimers, which binds ACTR1A/ACTB filament and dynactin and stabilizes dynactin. Interacts with N4BP2L1.

It localises to the cytoplasm. It is found in the cytoskeleton. The protein localises to the chromosome. Its subcellular location is the centromere. The protein resides in the kinetochore. Part of the dynactin complex that activates the molecular motor dynein for ultra-processive transport along microtubules. The protein is Dynactin subunit 5 (DCTN5) of Pongo abelii (Sumatran orangutan).